The primary structure comprises 123 residues: Small ribosomal subunit protein uS13 (123 aa).

The segment at 97 to 123 (PVRGQRTHTNAKTRKGRSRLPVAAKKK) is disordered.

The protein belongs to the universal ribosomal protein uS13 family. As to quaternary structure, part of the 30S ribosomal subunit. Forms a loose heterodimer with protein S19. Forms two bridges to the 50S subunit in the 70S ribosome.

In terms of biological role, located at the top of the head of the 30S subunit, it contacts several helices of the 16S rRNA. In the 70S ribosome it contacts the 23S rRNA (bridge B1a) and protein L5 of the 50S subunit (bridge B1b), connecting the 2 subunits; these bridges are implicated in subunit movement. Contacts the tRNAs in the A and P-sites. This is Small ribosomal subunit protein uS13 from Ehrlichia ruminantium (strain Gardel).